Consider the following 311-residue polypeptide: Coproporphyrin III ferrochelatase 1 (311 aa).

Fe-coproporphyrin III is bound by residues Tyr12, Arg29, 45 to 46 (RY), Ser53, and Tyr124. Fe(2+)-binding residues include His182 and Glu263.

The protein belongs to the ferrochelatase family.

The protein localises to the cytoplasm. It catalyses the reaction Fe-coproporphyrin III + 2 H(+) = coproporphyrin III + Fe(2+). It functions in the pathway porphyrin-containing compound metabolism; protoheme biosynthesis. Functionally, involved in coproporphyrin-dependent heme b biosynthesis. Catalyzes the insertion of ferrous iron into coproporphyrin III to form Fe-coproporphyrin III. This is Coproporphyrin III ferrochelatase 1 from Bacillus thuringiensis subsp. konkukian (strain 97-27).